Here is a 498-residue protein sequence, read N- to C-terminus: Glycerol kinase (498 aa).

Thr12 contacts ADP. Positions 12, 13, and 14 each coordinate ATP. Thr12 contacts sn-glycerol 3-phosphate. Arg16 is an ADP binding site. Positions 82, 83, 134, and 241 each coordinate sn-glycerol 3-phosphate. Glycerol is bound by residues Arg82, Glu83, Tyr134, Asp241, and Gln242. The ADP site is built by Thr263 and Gly310. The ATP site is built by Thr263, Gly310, Gln314, and Gly411. ADP is bound by residues Gly411 and Asn415.

The protein belongs to the FGGY kinase family.

It catalyses the reaction glycerol + ATP = sn-glycerol 3-phosphate + ADP + H(+). The protein operates within polyol metabolism; glycerol degradation via glycerol kinase pathway; sn-glycerol 3-phosphate from glycerol: step 1/1. Inhibited by fructose 1,6-bisphosphate (FBP). In terms of biological role, key enzyme in the regulation of glycerol uptake and metabolism. Catalyzes the phosphorylation of glycerol to yield sn-glycerol 3-phosphate. This Herminiimonas arsenicoxydans protein is Glycerol kinase.